Here is a 130-residue protein sequence, read N- to C-terminus: Small ribosomal subunit protein uS9 (130 aa).

The protein belongs to the universal ribosomal protein uS9 family.

In Herminiimonas arsenicoxydans, this protein is Small ribosomal subunit protein uS9.